Reading from the N-terminus, the 154-residue chain is Large ribosomal subunit protein uL13 (154 aa).

Belongs to the universal ribosomal protein uL13 family. Part of the 50S ribosomal subunit.

Functionally, this protein is one of the early assembly proteins of the 50S ribosomal subunit, although it is not seen to bind rRNA by itself. It is important during the early stages of 50S assembly. The chain is Large ribosomal subunit protein uL13 from Rhizobium rhizogenes (strain K84 / ATCC BAA-868) (Agrobacterium radiobacter).